The following is a 115-amino-acid chain: Cytochrome c oxidase subunit 3 (115 aa).

2 consecutive transmembrane segments (helical) span residues cysteine 32–leucine 52 and phenylalanine 70–isoleucine 90.

It belongs to the cytochrome c oxidase subunit 3 family. As to quaternary structure, component of the cytochrome c oxidase (complex IV, CIV), a multisubunit enzyme composed of a catalytic core of 3 subunits and several supernumerary subunits. The complex exists as a monomer or a dimer and forms supercomplexes (SCs) in the inner mitochondrial membrane with ubiquinol-cytochrome c oxidoreductase (cytochrome b-c1 complex, complex III, CIII).

It localises to the mitochondrion inner membrane. It carries out the reaction 4 Fe(II)-[cytochrome c] + O2 + 8 H(+)(in) = 4 Fe(III)-[cytochrome c] + 2 H2O + 4 H(+)(out). Functionally, component of the cytochrome c oxidase, the last enzyme in the mitochondrial electron transport chain which drives oxidative phosphorylation. The respiratory chain contains 3 multisubunit complexes succinate dehydrogenase (complex II, CII), ubiquinol-cytochrome c oxidoreductase (cytochrome b-c1 complex, complex III, CIII) and cytochrome c oxidase (complex IV, CIV), that cooperate to transfer electrons derived from NADH and succinate to molecular oxygen, creating an electrochemical gradient over the inner membrane that drives transmembrane transport and the ATP synthase. Cytochrome c oxidase is the component of the respiratory chain that catalyzes the reduction of oxygen to water. Electrons originating from reduced cytochrome c in the intermembrane space (IMS) are transferred via the dinuclear copper A center (CU(A)) of subunit 2 and heme A of subunit 1 to the active site in subunit 1, a binuclear center (BNC) formed by heme A3 and copper B (CU(B)). The BNC reduces molecular oxygen to 2 water molecules using 4 electrons from cytochrome c in the IMS and 4 protons from the mitochondrial matrix. This chain is Cytochrome c oxidase subunit 3 (COIII), found in Artemia salina (Brine shrimp).